A 425-amino-acid polypeptide reads, in one-letter code: Polyribonucleotide 5'-hydroxyl-kinase Clp1 (425 aa).

ATP is bound by residues E22, K62, and 124–129; that span reads DVGKST.

Belongs to the Clp1 family. Clp1 subfamily. As to quaternary structure, component of the tRNA splicing endonuclease complex, composed of CLP1, TSEN2, TSEN15, TSEN34 and TSEN54. Component of pre-mRNA cleavage complex II (CF-II). Also associates with numerous components of the pre-mRNA cleavage complex I (CF-I/CFIm), including NUDT21, CPSF2, CPSF3, CPSF6 and CPSF7. Interacts with CSTF2 and SYMPK. Requires Mg(2+) as cofactor. It depends on Mn(2+) as a cofactor. The cofactor is Ni(2+).

It localises to the nucleus. It carries out the reaction a 5'-end dephospho-2'-deoxyribonucleoside-DNA + ATP = a 5'-end 5'-phospho-2'-deoxyribonucleoside-DNA + ADP + H(+). The catalysed reaction is a 5'-end dephospho-ribonucleoside-RNA + ATP = a 5'-end 5'-phospho-ribonucleoside-RNA + ADP + H(+). Polynucleotide kinase that can phosphorylate the 5'-hydroxyl groups of double-stranded RNA (dsRNA), single-stranded RNA (ssRNA), double-stranded DNA (dsDNA) and double-stranded DNA:RNA hybrids. dsRNA is phosphorylated more efficiently than dsDNA, and the RNA component of a DNA:RNA hybrid is phosphorylated more efficiently than the DNA component. Plays a key role in both tRNA splicing and mRNA 3'-end formation. Component of the tRNA splicing endonuclease complex: phosphorylates the 5'-terminus of the tRNA 3'-exon during tRNA splicing; this phosphorylation event is a prerequisite for the subsequent ligation of the two exon halves and the production of a mature tRNA. Its role in tRNA splicing and maturation is required for cerebellar development. Component of the pre-mRNA cleavage complex II (CF-II), which seems to be required for mRNA 3'-end formation. Also phosphorylates the 5'-terminus of exogenously introduced short interfering RNAs (siRNAs), which is a necessary prerequisite for their incorporation into the RNA-induced silencing complex (RISC). However, endogenous siRNAs and microRNAs (miRNAs) that are produced by the cleavage of dsRNA precursors by DICER1 already contain a 5'-phosphate group, so this protein may be dispensible for normal RNA-mediated gene silencing. The sequence is that of Polyribonucleotide 5'-hydroxyl-kinase Clp1 from Homo sapiens (Human).